The chain runs to 148 residues: Large ribosomal subunit protein uL15 (148 aa).

The span at 1–30 shows a compositional bias: basic residues; that stretch reads MPSKLRKTRKLRGHVSHGHGRIGKHRKHPG. The segment at 1–38 is disordered; that stretch reads MPSKLRKTRKLRGHVSHGHGRIGKHRKHPGGRGNAGGM.

It belongs to the universal ribosomal protein uL15 family. In terms of assembly, component of the large ribosomal subunit.

The protein resides in the cytoplasm. In terms of biological role, component of the large ribosomal subunit. The ribosome is a large ribonucleoprotein complex responsible for the synthesis of proteins in the cell. The protein is Large ribosomal subunit protein uL15 (rpl27a) of Xenopus laevis (African clawed frog).